The sequence spans 106 residues: Small ribosomal subunit protein uS10 (106 aa).

Belongs to the universal ribosomal protein uS10 family. In terms of assembly, part of the 30S ribosomal subunit.

Involved in the binding of tRNA to the ribosomes. This is Small ribosomal subunit protein uS10 from Synechococcus sp. (strain CC9311).